Here is a 319-residue protein sequence, read N- to C-terminus: Dimethyladenosine transferase (319 aa).

Residues H37, L39, G64, E85, D113, and N128 each coordinate S-adenosyl-L-methionine.

The protein belongs to the class I-like SAM-binding methyltransferase superfamily. rRNA adenine N(6)-methyltransferase family.

It carries out the reaction adenosine(1779)/adenosine(1780) in 18S rRNA + 4 S-adenosyl-L-methionine = N(6)-dimethyladenosine(1779)/N(6)-dimethyladenosine(1780) in 18S rRNA + 4 S-adenosyl-L-homocysteine + 4 H(+). Specifically dimethylates two adjacent adenosines in the loop of a conserved hairpin near the 3'-end of 18S rRNA in the 40S particle. The chain is Dimethyladenosine transferase (DIM1) from Eremothecium gossypii (strain ATCC 10895 / CBS 109.51 / FGSC 9923 / NRRL Y-1056) (Yeast).